Reading from the N-terminus, the 485-residue chain is Terminase, large subunit (485 aa).

Residues 17-22, 40-45, and arginine 79 contribute to the ADP site; these read KPHHVQ and QSGKSE. An ATPase activity region spans residues 22–197; it reads QLAIHRSTAK…EFFLMGWRGG (176 aa). Residues glutamine 97 and glutamine 99 each coordinate ATP. Positions 125-131 match the Walker A motif motif; sequence SEFRGKS. The Walker B motif motif lies at 145 to 150; the sequence is FVILDE. Glutamate 150 (for ATPase activity) is an active-site residue. The segment at 256–438 is nuclease; that stretch reads SNSVFSGLDM…DIVMSLALAY (183 aa). Mg(2+) contacts are provided by aspartate 294, aspartate 347, and aspartate 429.

It belongs to the Tequatrovirus large terminase family. As to quaternary structure, interacts with the terminase small subunit; the active complex is composed of a pentamer of terminase large subunits and a dodecamer of terminase small subunits. Interacts with the portal protein. Mg(2+) is required as a cofactor.

Functionally, the terminase large subunit acts as an ATP driven molecular motor necessary for viral DNA translocation into empty capsids and as an endonuclease that cuts the viral genome to initiate and to end a packaging reaction The terminase lies at a unique vertex of the procapsid and is composed of two subunits, a small terminase subunit involved in viral DNA recognition (packaging sequence), and a large terminase subunit possessing endonucleolytic and ATPase activities. Both terminase subunits heterooligomerize and are docked on the portal protein to form the packaging machine. The terminase large subunit exhibits endonuclease activity and cleaves the viral genome concatemer. Once the capsid is packaged with the DNA, the terminase complex is substituted by the tail. This is Terminase, large subunit from Thermus thermophilus (Thermus thermophilus phage P23-45).